The sequence spans 233 residues: Ras-related protein RabV (233 aa).

A GTP-binding site is contributed by 15-22; the sequence is GEKEVGKS. An Effector region motif is present at residues 37–45; the sequence is YIPTIGIDF. GTP contacts are provided by residues 63-67 and 122-125; these read DYVSH and TKSD. Residues 143–182 are disordered; the sequence is QNNNNNNNNNNNNNNNNNNNNNNNNNNNNNSNNNNNNNLQ. The span at 144–180 shows a compositional bias: low complexity; that stretch reads NNNNNNNNNNNNNNNNNNNNNNNNNNNNNSNNNNNNN.

It belongs to the small GTPase superfamily. Rab family.

The sequence is that of Ras-related protein RabV (rabV) from Dictyostelium discoideum (Social amoeba).